Consider the following 464-residue polypeptide: tRNA-2-methylthio-N(6)-dimethylallyladenosine synthase (464 aa).

In terms of domain architecture, MTTase N-terminal spans 4 to 119 (RTFHIMTFGC…APQAIERLVQ (116 aa)). Positions 13, 48, 82, 158, 162, and 165 each coordinate [4Fe-4S] cluster. A Radical SAM core domain is found at 144–375 (GEVPVSAYVN…QEVQNEYSEA (232 aa)). Residues 378-461 (QAMVGKTVMV…KHSLTGEPAG (84 aa)) form the TRAM domain. Positions 393–420 (SPKSAAGSGTDAQNAAEESGRTASSWQG) are disordered.

The protein belongs to the methylthiotransferase family. MiaB subfamily. In terms of assembly, monomer. [4Fe-4S] cluster serves as cofactor.

The protein localises to the cytoplasm. It catalyses the reaction N(6)-dimethylallyladenosine(37) in tRNA + (sulfur carrier)-SH + AH2 + 2 S-adenosyl-L-methionine = 2-methylsulfanyl-N(6)-dimethylallyladenosine(37) in tRNA + (sulfur carrier)-H + 5'-deoxyadenosine + L-methionine + A + S-adenosyl-L-homocysteine + 2 H(+). Catalyzes the methylthiolation of N6-(dimethylallyl)adenosine (i(6)A), leading to the formation of 2-methylthio-N6-(dimethylallyl)adenosine (ms(2)i(6)A) at position 37 in tRNAs that read codons beginning with uridine. The sequence is that of tRNA-2-methylthio-N(6)-dimethylallyladenosine synthase from Oleidesulfovibrio alaskensis (strain ATCC BAA-1058 / DSM 17464 / G20) (Desulfovibrio alaskensis).